The primary structure comprises 202 residues: Thymidylate kinase (202 aa).

Glycine 7–threonine 14 contributes to the ATP binding site.

It belongs to the thymidylate kinase family.

The catalysed reaction is dTMP + ATP = dTDP + ADP. Phosphorylation of dTMP to form dTDP in both de novo and salvage pathways of dTTP synthesis. In Acinetobacter baylyi (strain ATCC 33305 / BD413 / ADP1), this protein is Thymidylate kinase.